Here is a 448-residue protein sequence, read N- to C-terminus: Nicotinate phosphoribosyltransferase pncB1 (448 aa).

The tract at residues 1–21 is disordered; it reads MGPPPAARRREGEPDNQDPAG. His212 carries the post-translational modification Phosphohistidine. Residues 353–372 form a disordered region; the sequence is RSSYKESPGGRKEALRRSRA.

The protein belongs to the NAPRTase family. Transiently phosphorylated on a His residue during the reaction cycle. Phosphorylation strongly increases the affinity for substrates and increases the rate of nicotinate D-ribonucleotide production. Dephosphorylation regenerates the low-affinity form of the enzyme, leading to product release.

It catalyses the reaction nicotinate + 5-phospho-alpha-D-ribose 1-diphosphate + ATP + H2O = nicotinate beta-D-ribonucleotide + ADP + phosphate + diphosphate. Its pathway is cofactor biosynthesis; NAD(+) biosynthesis; nicotinate D-ribonucleotide from nicotinate: step 1/1. Its function is as follows. Involved in the Preiss-Handler pathway, which is a recycling route that permits the salvage of free nicotinamide (NM) and nicotinic acid (Na) involved in the NAD biosynthesis. Catalyzes the synthesis of beta-nicotinate D-ribonucleotide from nicotinate and 5-phospho-D-ribose 1-phosphate at the expense of ATP. It is not able to use nicotinamide. PncB1 contributes to basal NAD level. In Mycobacterium tuberculosis (strain ATCC 25618 / H37Rv), this protein is Nicotinate phosphoribosyltransferase pncB1 (pncB1).